A 1243-amino-acid chain; its full sequence is Tau-tubulin kinase 2 (1243 aa).

The Protein kinase domain occupies 21-284; it reads WKVLRKIGGG…LLTSVFDNSI (264 aa). Residues 27 to 35 and K50 each bind ATP; that span reads IGGGGFGEI. Residue D141 is the Proton acceptor of the active site. S445 bears the Phosphoserine mark. The segment covering 674-683 has biased composition (polar residues); sequence VASTQSTSGS. Disordered regions lie at residues 674–695 and 737–761; these read VAST…KKDL and TGHD…DPPD. Residue S786 is modified to Phosphoserine. The segment at 1063–1086 is disordered; that stretch reads QINGSASPQFLPRPPPGKPPVRPG. The span at 1073–1084 shows a compositional bias: pro residues; the sequence is LPRPPPGKPPVR. The residue at position 1102 (S1102) is a Phosphoserine. A compositionally biased stretch (polar residues) spans 1115–1129; that stretch reads QNGSQKSRSTTQCKS. A disordered region spans residues 1115–1243; sequence QNGSQKSRST…KSKPASKLSR (129 aa). Low complexity-rich tracts occupy residues 1144-1170, 1187-1202, and 1227-1243; these read VVPR…PSRA, SKSP…SRRS, and SSKT…KLSR.

It belongs to the protein kinase superfamily. CK1 Ser/Thr protein kinase family. Interacts with CEP164. Interacts with MCRS1; the interaction is required for recruitment of TTBK2 to the mother centriole.

The protein localises to the cell projection. It is found in the cilium. Its subcellular location is the cytoplasm. It localises to the cytoskeleton. The protein resides in the cilium basal body. The protein localises to the microtubule organizing center. It is found in the centrosome. Its subcellular location is the centriole. It localises to the cytosol. The protein resides in the nucleus. It carries out the reaction L-seryl-[protein] + ATP = O-phospho-L-seryl-[protein] + ADP + H(+). The catalysed reaction is L-threonyl-[protein] + ATP = O-phospho-L-threonyl-[protein] + ADP + H(+). Serine/threonine kinase that acts as a key regulator of ciliogenesis: controls the initiation of ciliogenesis by binding to the distal end of the basal body and promoting the removal of CCP110, which caps the mother centriole, leading to the recruitment of IFT proteins, which build the ciliary axoneme. Has some substrate preference for proteins that are already phosphorylated on a Tyr residue at the +2 position relative to the phosphorylation site. Able to phosphorylate tau on serines in vitro. Phosphorylates MPHOSPH9 which promotes its ubiquitination and proteasomal degradation, loss of MPHOSPH9 facilitates the removal of the CP110-CEP97 complex (a negative regulator of ciliogenesis) from the mother centrioles, promoting the initiation of ciliogenesis. Required for recruitment of CPLANE2 and INTU to the mother centriole. The chain is Tau-tubulin kinase 2 (Ttbk2) from Mus musculus (Mouse).